We begin with the raw amino-acid sequence, 337 residues long: Glyceraldehyde-3-phosphate dehydrogenase (337 aa).

NAD(+)-binding positions include 13–14 (RI), aspartate 35, and arginine 80. D-glyceraldehyde 3-phosphate is bound by residues 151–153 (SCT), threonine 182, 211–212 (TG), and arginine 234. Cysteine 152 serves as the catalytic Nucleophile. Position 316 (asparagine 316) interacts with NAD(+).

It belongs to the glyceraldehyde-3-phosphate dehydrogenase family. As to quaternary structure, homotetramer.

The protein resides in the cytoplasm. It carries out the reaction D-glyceraldehyde 3-phosphate + phosphate + NAD(+) = (2R)-3-phospho-glyceroyl phosphate + NADH + H(+). It participates in carbohydrate degradation; glycolysis; pyruvate from D-glyceraldehyde 3-phosphate: step 1/5. The chain is Glyceraldehyde-3-phosphate dehydrogenase (GPD1) from Monascus purpureus (Red mold).